We begin with the raw amino-acid sequence, 498 residues long: L-proline--[L-prolyl-carrier protein] ligase (498 aa).

The protein belongs to the ATP-dependent AMP-binding enzyme family.

The enzyme catalyses holo-[peptidyl-carrier protein] + L-proline + ATP = L-prolyl-[peptidyl-carrier protein] + AMP + diphosphate. In terms of biological role, involved in the biosynthesis of pyoluteorin. Catalyzes the conversion of L-proline to L-prolyl-AMP and the transfer of the L-prolyl group to acyl carrier protein PltL. The polypeptide is L-proline--[L-prolyl-carrier protein] ligase (Pseudomonas fluorescens (strain ATCC BAA-477 / NRRL B-23932 / Pf-5)).